The sequence spans 252 residues: Imidazole glycerol phosphate synthase subunit HisF (252 aa).

Catalysis depends on residues D11 and D130.

The protein belongs to the HisA/HisF family. As to quaternary structure, heterodimer of HisH and HisF.

It localises to the cytoplasm. It catalyses the reaction 5-[(5-phospho-1-deoxy-D-ribulos-1-ylimino)methylamino]-1-(5-phospho-beta-D-ribosyl)imidazole-4-carboxamide + L-glutamine = D-erythro-1-(imidazol-4-yl)glycerol 3-phosphate + 5-amino-1-(5-phospho-beta-D-ribosyl)imidazole-4-carboxamide + L-glutamate + H(+). The protein operates within amino-acid biosynthesis; L-histidine biosynthesis; L-histidine from 5-phospho-alpha-D-ribose 1-diphosphate: step 5/9. Functionally, IGPS catalyzes the conversion of PRFAR and glutamine to IGP, AICAR and glutamate. The HisF subunit catalyzes the cyclization activity that produces IGP and AICAR from PRFAR using the ammonia provided by the HisH subunit. This Staphylococcus saprophyticus subsp. saprophyticus (strain ATCC 15305 / DSM 20229 / NCIMB 8711 / NCTC 7292 / S-41) protein is Imidazole glycerol phosphate synthase subunit HisF.